Here is a 239-residue protein sequence, read N- to C-terminus: Pimeloyl-[acyl-carrier protein] methyl ester esterase (239 aa).

Substrate is bound by residues tryptophan 20, 77 to 78, and 138 to 142; these read SM and FISLQ. Catalysis depends on serine 77, which acts as the Nucleophile. Catalysis depends on residues aspartate 192 and histidine 220. Histidine 220 is a substrate binding site.

It belongs to the AB hydrolase superfamily. Carboxylesterase BioH family. Monomer.

It is found in the cytoplasm. The catalysed reaction is 6-carboxyhexanoyl-[ACP] methyl ester + H2O = 6-carboxyhexanoyl-[ACP] + methanol + H(+). Its pathway is cofactor biosynthesis; biotin biosynthesis. Functionally, the physiological role of BioH is to remove the methyl group introduced by BioC when the pimeloyl moiety is complete. It allows to synthesize pimeloyl-ACP via the fatty acid synthetic pathway through the hydrolysis of the ester bonds of pimeloyl-ACP esters. The protein is Pimeloyl-[acyl-carrier protein] methyl ester esterase of Legionella pneumophila (strain Paris).